The following is a 100-amino-acid chain: Integration host factor subunit alpha (100 aa).

This sequence belongs to the bacterial histone-like protein family. As to quaternary structure, heterodimer of an alpha and a beta chain.

This protein is one of the two subunits of integration host factor, a specific DNA-binding protein that functions in genetic recombination as well as in transcriptional and translational control. In Zymomonas mobilis subsp. mobilis (strain ATCC 31821 / ZM4 / CP4), this protein is Integration host factor subunit alpha (ihfA).